The following is a 438-amino-acid chain: Coiled-coil domain-containing protein 78 (438 aa).

2 coiled-coil regions span residues histidine 74–aspartate 105 and serine 217–arginine 246. The segment at phenylalanine 345–aspartate 381 is disordered.

It belongs to the CCDC78 family. In terms of tissue distribution, expressed primarily in skeletal muscle.

The protein resides in the cytoplasm. It localises to the cytoskeleton. The protein localises to the microtubule organizing center. It is found in the centrosome. Its subcellular location is the centriole. The protein resides in the perinuclear region. It localises to the cell membrane. The protein localises to the sarcolemma. It is found in the sarcoplasmic reticulum. Component of the deuterosome, a structure that promotes de novo centriole amplification in multiciliated cells that can generate more than 100 centrioles. Deuterosome-mediated centriole amplification occurs in terminally differentiated multiciliated cells (G1/0) and not in S phase. Essential for centriole amplification and is required for CEP152 localization to the deuterosome. This is Coiled-coil domain-containing protein 78 (CCDC78) from Homo sapiens (Human).